The sequence spans 297 residues: Vacuolar protein sorting-associated protein 26C (297 aa).

This sequence belongs to the VPS26 family. Component of the commander complex that is essential for endosomal recycling of transmembrane cargos; the commander complex is composed of the CCC subcomplex and the retriever subcomplex. Component of the heterotrimeric retriever complex consisting of VPS26C, VPS29 and VPS35L; within the complex interacts with VPS35L. Interacts with SNX17 (via C-terminus); the interaction is direct and associates SNX17 with the retriever complex. Interacts with SNX31; the interaction is direct.

The protein resides in the endosome. Functionally, component of the commander complex that is essential for endosomal recycling of transmembrane cargos; the commander complex is composed of the CCC subcomplex and the retriever subcomplex. Component of the retriever complex, which is a heterotrimeric complex related to retromer cargo-selective complex (CSC) and essential for retromer-independent retrieval and recycling of numerous cargos such as integrin alpha-5/beta-1 (ITGA5:ITGB1). The recruitment of the retriever complex to the endosomal membrane involves CCC and WASH complexes. In the endosomes, drives the retriever and recycling of NxxY-motif-containing cargo proteins by coupling to SNX17, a cargo essential for the homeostatic maintenance of numerous cell surface proteins associated with processes that include cell migration, cell adhesion, nutrient supply and cell signaling. The polypeptide is Vacuolar protein sorting-associated protein 26C (Mus musculus (Mouse)).